A 108-amino-acid polypeptide reads, in one-letter code: Nucleoid-associated protein Pmen_2646 (108 aa).

The disordered stretch occupies residues 1-25 (MMKGGMAGLMKQAQQMQEKMQKMQE).

The protein belongs to the YbaB/EbfC family. In terms of assembly, homodimer.

Its subcellular location is the cytoplasm. It localises to the nucleoid. Binds to DNA and alters its conformation. May be involved in regulation of gene expression, nucleoid organization and DNA protection. The chain is Nucleoid-associated protein Pmen_2646 from Ectopseudomonas mendocina (strain ymp) (Pseudomonas mendocina).